The chain runs to 270 residues: tRNA pseudouridine synthase A (270 aa).

Asp-60 serves as the catalytic Nucleophile. The interval Phe-107–Phe-111 is RNA binding. Tyr-118 provides a ligand contact to substrate. The interaction with tRNA stretch occupies residues Gln-168 to Arg-172.

This sequence belongs to the tRNA pseudouridine synthase TruA family. In terms of assembly, homodimer.

The enzyme catalyses uridine(38/39/40) in tRNA = pseudouridine(38/39/40) in tRNA. In terms of biological role, formation of pseudouridine at positions 38, 39 and 40 in the anticodon stem and loop of transfer RNAs. This is tRNA pseudouridine synthase A from Escherichia coli (strain 55989 / EAEC).